The chain runs to 264 residues: Glutamate racemase 2 (264 aa).

Substrate contacts are provided by residues 10-11 (DS) and 42-43 (YG). The active-site Proton donor/acceptor is the cysteine 73. 74 to 75 (NT) provides a ligand contact to substrate. Cysteine 181 functions as the Proton donor/acceptor in the catalytic mechanism. 182–183 (TH) provides a ligand contact to substrate.

It belongs to the aspartate/glutamate racemases family.

It carries out the reaction L-glutamate = D-glutamate. Its pathway is cell wall biogenesis; peptidoglycan biosynthesis. Provides the (R)-glutamate required for cell wall biosynthesis. The sequence is that of Glutamate racemase 2 from Caldanaerobacter subterraneus subsp. tengcongensis (strain DSM 15242 / JCM 11007 / NBRC 100824 / MB4) (Thermoanaerobacter tengcongensis).